We begin with the raw amino-acid sequence, 275 residues long: Pantothenate synthetase (275 aa).

26–33 (MGFLHEGH) is an ATP binding site. Catalysis depends on H33, which acts as the Proton donor. Position 57 (Q57) interacts with (R)-pantoate. Q57 is a binding site for beta-alanine. 143–146 (GQKD) contributes to the ATP binding site. Q149 contacts (R)-pantoate. Residues A172 and 180–183 (RSSR) each bind ATP.

Belongs to the pantothenate synthetase family. In terms of assembly, homodimer.

It localises to the cytoplasm. The catalysed reaction is (R)-pantoate + beta-alanine + ATP = (R)-pantothenate + AMP + diphosphate + H(+). Its pathway is cofactor biosynthesis; (R)-pantothenate biosynthesis; (R)-pantothenate from (R)-pantoate and beta-alanine: step 1/1. Functionally, catalyzes the condensation of pantoate with beta-alanine in an ATP-dependent reaction via a pantoyl-adenylate intermediate. The chain is Pantothenate synthetase from Gluconobacter oxydans (strain 621H) (Gluconobacter suboxydans).